The primary structure comprises 1959 residues: Myosin-9 (1959 aa).

The 51-residue stretch at 27 to 77 (AAKKLVWVPSEKSGFEAASLKEEVGDEAIVELAENGKKVKVNKDDIQKMNP) folds into the Myosin N-terminal SH3-like domain. A Myosin motor domain is found at 81–776 (SKVEDMAELT…VLAHLEEERD (696 aa)). 174-181 (GESGAGKT) contacts ATP. The actin-binding stretch occupies residues 654 to 676 (LAKLMATLRNTNPNFVRCIIPNH). The region spanning 779 to 808 (ITDVIIGFQACCRGYLARKAFAKRQQQLTA) is the IQ domain. The stretch at 837–1925 (LLQVSRQEEE…LKSKLRRGDL (1089 aa)) forms a coiled coil. 4 disordered regions span residues 1118 to 1168 (EDLE…REQE), 1694 to 1717 (RAKR…SGKG), 1879 to 1917 (LEEA…SSLK), and 1936 to 1959 (KGTG…KATE). 2 stretches are compositionally biased toward basic and acidic residues: residues 1122-1148 (SERA…KTEL) and 1694-1704 (RAKRQAQQERD). The segment covering 1947–1959 (DGKAEAGDAKATE) has biased composition (basic and acidic residues).

The protein belongs to the TRAFAC class myosin-kinesin ATPase superfamily. Myosin family. In terms of assembly, myosin is a hexameric protein that consists of 2 heavy chain subunits (MHC), 2 alkali light chain subunits (MLC) and 2 regulatory light chain subunits (MLC-2). In terms of tissue distribution, expressed in fibroblasts, brain, lung, kidney, spleen, and skeletal, cardiac and smooth muscles.

It is found in the cytoplasm. Its subcellular location is the cytoskeleton. It localises to the cell cortex. The protein resides in the cytoplasmic vesicle. The protein localises to the secretory vesicle. It is found in the cortical granule. Cellular myosin that appears to play a role in cytokinesis, cell shape, and specialized functions such as secretion and capping. In Gallus gallus (Chicken), this protein is Myosin-9 (MYH9).